The chain runs to 255 residues: Urease accessory protein UreD 1 (255 aa).

The protein belongs to the UreD family. As to quaternary structure, ureD, UreF and UreG form a complex that acts as a GTP-hydrolysis-dependent molecular chaperone, activating the urease apoprotein by helping to assemble the nickel containing metallocenter of UreC. The UreE protein probably delivers the nickel.

It is found in the cytoplasm. Required for maturation of urease via the functional incorporation of the urease nickel metallocenter. This Streptomyces griseus subsp. griseus (strain JCM 4626 / CBS 651.72 / NBRC 13350 / KCC S-0626 / ISP 5235) protein is Urease accessory protein UreD 1.